A 359-amino-acid chain; its full sequence is Peptide chain release factor 1 (359 aa).

Gln-236 carries the post-translational modification N5-methylglutamine.

The protein belongs to the prokaryotic/mitochondrial release factor family. In terms of processing, methylated by PrmC. Methylation increases the termination efficiency of RF1.

It localises to the cytoplasm. Its function is as follows. Peptide chain release factor 1 directs the termination of translation in response to the peptide chain termination codons UAG and UAA. In Streptococcus agalactiae serotype Ia (strain ATCC 27591 / A909 / CDC SS700), this protein is Peptide chain release factor 1.